A 230-amino-acid polypeptide reads, in one-letter code: Protein tumorous testis (230 aa).

The RRM domain occupies 37-128 (GELFLSCIPR…RELVLKNVES (92 aa)).

As to quaternary structure, part of a complex composed of at least tut, bam and bgcn; complex formation does not require RNA. Interacts with bam (via N-terminus); the interaction is direct. Interacts with bgcn; the interaction is indirect and is mediated by bam. As part of the bam-bgcn-tut complex associates with twin; may recruit the CCR4-NOT1 deadenylation complex to mRNA 3'UTRs to mediate post-transcriptional regulation of expression.

It localises to the cytoplasm. Its function is as follows. RNA binding protein that forms a complex with bam and bgcn, involved in 3'UTR-dependent regulation of a subset of mRNAs. Preferentially binds a long isoform of mei-P26 transcripts. Involved in 3'UTR-dependent post-transcriptional repression of several 3'-RNA processing factors. Involved in promoting germline stem cell lineage differentiation and mitosis-to-meiosis transition. Required for proper transit amplification of spermatogonia. The polypeptide is Protein tumorous testis (Drosophila melanogaster (Fruit fly)).